The following is a 280-amino-acid chain: Dolichyl-diphosphooligosaccharide--protein glycosyltransferase subunit 2 (280 aa).

A signal peptide spans 1–16; sequence MKLLLVLLTIASVALA. Over 17 to 187 the chain is Lumenal; it reads AVDDVAVNNF…FRQPEKRPSA (171 aa). Residues 188-208 traverse the membrane as a helical segment; it reads LISDLFTIICLSPLLILVVLW. Residues 209–222 are Cytoplasmic-facing; that stretch reads SQVGINFQNAPASP. Residues 223-243 form a helical membrane-spanning segment; the sequence is WVPIFHVGLIGIFGIYFMFWV. Residue Gln-244 is a topological domain, lumenal. The chain crosses the membrane as a helical span at residues 245–265; that stretch reads FDMFVTLKYLAVLGFLTFVAG. The Cytoplasmic segment spans residues 266 to 280; it reads NRVLRAISESKQKSE.

This sequence belongs to the SWP1 family. In terms of assembly, component of the oligosaccharyltransferase (OST) complex.

It localises to the endoplasmic reticulum membrane. It participates in protein modification; protein glycosylation. In terms of biological role, subunit of the oligosaccharyl transferase (OST) complex that catalyzes the initial transfer of a defined glycan (Glc(3)Man(9)GlcNAc(2) in eukaryotes) from the lipid carrier dolichol-pyrophosphate to an asparagine residue within an Asn-X-Ser/Thr consensus motif in nascent polypeptide chains, the first step in protein N-glycosylation. N-glycosylation occurs cotranslationally and the complex associates with the Sec61 complex at the channel-forming translocon complex that mediates protein translocation across the endoplasmic reticulum (ER). All subunits are required for a maximal enzyme activity. In Caenorhabditis elegans, this protein is Dolichyl-diphosphooligosaccharide--protein glycosyltransferase subunit 2.